We begin with the raw amino-acid sequence, 110 residues long: Large ribosomal subunit protein uL22 (110 aa).

This sequence belongs to the universal ribosomal protein uL22 family. As to quaternary structure, part of the 50S ribosomal subunit.

In terms of biological role, this protein binds specifically to 23S rRNA; its binding is stimulated by other ribosomal proteins, e.g. L4, L17, and L20. It is important during the early stages of 50S assembly. It makes multiple contacts with different domains of the 23S rRNA in the assembled 50S subunit and ribosome. Functionally, the globular domain of the protein is located near the polypeptide exit tunnel on the outside of the subunit, while an extended beta-hairpin is found that lines the wall of the exit tunnel in the center of the 70S ribosome. This Syntrophotalea carbinolica (strain DSM 2380 / NBRC 103641 / GraBd1) (Pelobacter carbinolicus) protein is Large ribosomal subunit protein uL22.